Consider the following 352-residue polypeptide: Photosystem II D2 protein (352 aa).

A helical transmembrane segment spans residues 40 to 60; it reads CAFMALGGWLTGTTFVTSWYT. Position 117 (His117) interacts with chlorophyll a. Residues 124-140 form a helical membrane-spanning segment; it reads GFMLRQFEIARLVGIRP. Positions 129 and 142 each coordinate pheophytin a. The helical transmembrane segment at 152-165 threads the bilayer; the sequence is VFVSVFLMYPLGQS. A chlorophyll a-binding site is contributed by His197. The helical transmembrane segment at 207–227 threads the bilayer; the sequence is GALLCAIHGATVENTLFEDSD. A plastoquinone contacts are provided by His214 and Phe261. His214 serves as a coordination point for Fe cation. Fe cation is bound at residue His268. Residues 278–294 form a helical membrane-spanning segment; sequence GLWMSSVGIVGLALNLR.

This sequence belongs to the reaction center PufL/M/PsbA/D family. In terms of assembly, PSII is composed of 1 copy each of membrane proteins PsbA, PsbB, PsbC, PsbD, PsbE, PsbF, PsbH, PsbI, PsbJ, PsbK, PsbL, PsbM, PsbT, PsbX, PsbY, PsbZ, Psb30/Ycf12, peripheral proteins PsbO, CyanoQ (PsbQ), PsbU, PsbV and a large number of cofactors. It forms dimeric complexes. It depends on The D1/D2 heterodimer binds P680, chlorophylls that are the primary electron donor of PSII, and subsequent electron acceptors. It shares a non-heme iron and each subunit binds pheophytin, quinone, additional chlorophylls, carotenoids and lipids. There is also a Cl(-1) ion associated with D1 and D2, which is required for oxygen evolution. The PSII complex binds additional chlorophylls, carotenoids and specific lipids. as a cofactor.

Its subcellular location is the cellular thylakoid membrane. It catalyses the reaction 2 a plastoquinone + 4 hnu + 2 H2O = 2 a plastoquinol + O2. Photosystem II (PSII) is a light-driven water:plastoquinone oxidoreductase that uses light energy to abstract electrons from H(2)O, generating O(2) and a proton gradient subsequently used for ATP formation. It consists of a core antenna complex that captures photons, and an electron transfer chain that converts photonic excitation into a charge separation. The D1/D2 (PsbA/PsbD) reaction center heterodimer binds P680, the primary electron donor of PSII as well as several subsequent electron acceptors. D2 is needed for assembly of a stable PSII complex. The chain is Photosystem II D2 protein from Picosynechococcus sp. (strain ATCC 27264 / PCC 7002 / PR-6) (Agmenellum quadruplicatum).